We begin with the raw amino-acid sequence, 445 residues long: Disintegrin and metalloproteinase domain-containing protein 18 (445 aa).

Positions 1-106 constitute a Peptidase M12B domain; it reads IYRKHLKYIG…LDMQCLGDLS (106 aa). The Extracellular segment spans residues 1 to 409; that stretch reads IYRKHLKYIG…TKRLSQHADS (409 aa). 3 disulfides stabilise this stretch: Cys18–Cys101, Cys60–Cys85, and Cys62–Cys67. N-linked (GlcNAc...) asparagine glycans are attached at residues Asn19 and Asn59. Residues Asn84 and Asn131 are each glycosylated (N-linked (GlcNAc...) asparagine). The region spanning 113-202 is the Disintegrin domain; that stretch reads QSVCGNGIVE…HCVPDTFALD (90 aa). Residues Cys173 and Cys194 are joined by a disulfide bond. Asn333 and Asn340 each carry an N-linked (GlcNAc...) asparagine glycan. In terms of domain architecture, EGF-like spans 342–376; it reads TGNDCNAAKKCKGNGICNNFGHCQCFPDYRPPDCN. 3 disulfides stabilise this stretch: Cys346–Cys358, Cys352–Cys364, and Cys366–Cys375. A helical transmembrane segment spans residues 410 to 430; the sequence is WVILGFFIFLPFIMTLFLGII. The Cytoplasmic portion of the chain corresponds to 431–445; the sequence is KRNERKIVPQKEQER.

The prodomain and the metalloprotease-like domain are cleaved during the epididymal maturation of the spermatozoa. Expressed specifically in testis.

It is found in the membrane. In terms of biological role, sperm surface membrane protein that may be involved in spermatogenesis and fertilization. This is a non catalytic metalloprotease-like protein. In Rattus norvegicus (Rat), this protein is Disintegrin and metalloproteinase domain-containing protein 18 (Adam18).